A 475-amino-acid polypeptide reads, in one-letter code: Aspartyl/glutamyl-tRNA(Asn/Gln) amidotransferase subunit B (475 aa).

This sequence belongs to the GatB/GatE family. GatB subfamily. In terms of assembly, heterotrimer of A, B and C subunits.

The catalysed reaction is L-glutamyl-tRNA(Gln) + L-glutamine + ATP + H2O = L-glutaminyl-tRNA(Gln) + L-glutamate + ADP + phosphate + H(+). The enzyme catalyses L-aspartyl-tRNA(Asn) + L-glutamine + ATP + H2O = L-asparaginyl-tRNA(Asn) + L-glutamate + ADP + phosphate + 2 H(+). Its function is as follows. Allows the formation of correctly charged Asn-tRNA(Asn) or Gln-tRNA(Gln) through the transamidation of misacylated Asp-tRNA(Asn) or Glu-tRNA(Gln) in organisms which lack either or both of asparaginyl-tRNA or glutaminyl-tRNA synthetases. The reaction takes place in the presence of glutamine and ATP through an activated phospho-Asp-tRNA(Asn) or phospho-Glu-tRNA(Gln). This is Aspartyl/glutamyl-tRNA(Asn/Gln) amidotransferase subunit B from Thermoanaerobacter sp. (strain X514).